Consider the following 520-residue polypeptide: MKPENFRADTKRPLTGEEYLKSLQDGREIYIYGERVKDVTTHPAFRNAAASVAQLYDALHNPELQNTLCWGTDTGSGGYTHKFFRVAKSADDLRQQRDAIAEWSRLSYGWMGRTPDYKAAFGGGLGANPGFYGQFEQNARDWYTRIQETGLYFNHAIVNPPIDRHKPADEVKDVYIKLEKETDAGIIVSGAKVVATNSALTHYNMIGFGSAQVMGENPDFALMFVAPMDAEGDKLISRASYELVAGATGSPYDYPLSSRFDENDAILVMDNVLIPWENVLIYRDFDRCRRWTMEGGFARMYPLQACVRLAVKLDFITALLKRSLECTGTLEFRGVQAELGEVVAWRNMFWALSDSMCAEATPWVNGAYLPDHAALQTYRVMAPMPYAKIKNIIERSVTSGLIYLPSSARDLNNPQINDTLAKYVRGSNGMDHVERIKILKLMWDAIGSEFGGCHELYEINYSGSQDEIRLQCLRQAQSSGNMDKMMAMVDRCLSEYDQNGWTVPHLHNNTDINMLDKLLK.

The protein belongs to the FADH(2)-utilizing monooxygenase family. 4-HPA 3-monooxygenase consists of a reductase component HpaC and an oxygenase component HpaB.

The enzyme catalyses 4-hydroxyphenylacetate + FADH2 + O2 = 3,4-dihydroxyphenylacetate + FAD + H2O + H(+). It functions in the pathway aromatic compound metabolism; 4-hydroxyphenylacetate degradation; pyruvate and succinate semialdehyde from 4-hydroxyphenylacetate: step 1/7. In terms of biological role, utilizes FADH(2) supplied by HpaC or by another flavin reductase, to catalyze the hydroxylation of 4-hydroxyphenylacetic acid, leading to the production of 3,4-DHPA. The chain is 4-hydroxyphenylacetate 3-monooxygenase oxygenase component (hpaB) from Klebsiella oxytoca.